Reading from the N-terminus, the 22-residue chain is Mu-conotoxin TIIIA (22 aa).

3 cysteine pairs are disulfide-bonded: Cys-4-Cys-16, Cys-5-Cys-21, and Cys-11-Cys-22. A 4-hydroxyproline mark is found at Pro-8 and Pro-18. Cys-22 carries the cysteine amide modification.

Belongs to the conotoxin M superfamily. Expressed by the venom duct.

Its subcellular location is the secreted. Functionally, mu-conotoxins block voltage-gated sodium channels (Nav). This synthetic toxin reversibly and potently blocks rNav1.4/SCN4A (IC(50) is 9 nM) and rNav1.2/SCN2A (IC(50) is 40 nM). It also moderately blocks rNav1.1/SCN1A, rNav1.3/SCN3A, and rNav1.6/SCN8A. The block of SCN1A and SCN2A is modified when beta-subunits are coexpressed with alpha subunits. Hence, blocks of channels containing beta-1 and beta-3 subunits are more potent (compared to channels without beta subunits), whereas blocks of channels containing beta-2 and beta-4 subunits are less potent (compared to channels without beta subunits). In Conus tulipa (Fish-hunting cone snail), this protein is Mu-conotoxin TIIIA.